The following is a 318-amino-acid chain: MSLLLYYALPALGSYAMLSIFFLRRPHLLHTPRAPTFRIRLGAHRGGSGELLENTMEAMENSMAQRSDLLELDCQLTRDRVVVVSHDENLCRQSGLNRDVGSLDFEDLPLYKEKLEVYFSPGHFAHGSDRRMVRLEDLFQRFPRTPMSVEIKGKNEELIREIAGLVRRYDRNEITIWASEKSSVMKKCKAANPEMPLSFTISRGFWVLLSYYLGLLPFIPIPEKFFFCFLPNIINRTYFPFSCSCLNQLLAVVSKWLIMRKSLIRHLEERGVQVVFWCLNEESDFEAAFSVGATGVITDYPTALRHYLDNHGPAARTS.

Residues 1–2 lie on the Cytoplasmic side of the membrane; it reads MS. The helical transmembrane segment at 3-23 threads the bilayer; it reads LLLYYALPALGSYAMLSIFFL. Residues 24–198 are Extracellular-facing; sequence RRPHLLHTPR…KAANPEMPLS (175 aa). The GP-PDE domain maps to 39–308; it reads IRLGAHRGGS…DYPTALRHYL (270 aa). Residues glutamate 71, aspartate 73, and histidine 86 each coordinate a divalent metal cation. A helical membrane pass occupies residues 199–221; the sequence is FTISRGFWVLLSYYLGLLPFIPI. The Cytoplasmic portion of the chain corresponds to 222-318; that stretch reads PEKFFFCFLP…DNHGPAARTS (97 aa).

Belongs to the glycerophosphoryl diester phosphodiesterase family. In terms of tissue distribution, widely expressed, with high level in kidney and ovary.

The protein localises to the membrane. It is found in the cytoplasm. Its subcellular location is the perinuclear region. It localises to the endoplasmic reticulum. It carries out the reaction 1-hexadecanoyl-sn-glycero-3-phosphocholine + H2O = 1-hexadecanoyl-sn-glycero-3-phosphate + choline + H(+). The catalysed reaction is 1-hexadecanoyl-sn-glycero-3-phosphocholine + H2O = sn-glycerol 3-phosphocholine + hexadecanoate + H(+). The enzyme catalyses 1-O-(1Z-octadecenyl)-sn-glycero-3-phospho-N-hexadecanoyl-ethanolamine + H2O = 1-O-(1Z-octadecenyl)-sn-glycero-3-phosphate + N-hexadecanoylethanolamine + H(+). It catalyses the reaction N-(5Z,8Z,11Z,14Z-eicosatetraenoyl)-1-(9Z-octadecenoyl)-sn-glycero-3-phosphoethanolamine + H2O = N-(5Z,8Z,11Z,14Z-eicosatetraenoyl)-ethanolamine + 1-(9Z-octadecenoyl)-sn-glycero-3-phosphate + H(+). It carries out the reaction N,1-di-(9Z-octadecenoyl)-sn-glycero-3-phosphoethanolamine + H2O = N-(9Z-octadecenoyl) ethanolamine + 1-(9Z-octadecenoyl)-sn-glycero-3-phosphate + H(+). The catalysed reaction is N-hexadecanoyl-1-(9Z-octadecenoyl)-sn-glycero-3-phosphoethanolamine + H2O = N-hexadecanoylethanolamine + 1-(9Z-octadecenoyl)-sn-glycero-3-phosphate + H(+). The enzyme catalyses 1-O-hexadecyl-sn-glycero-3-phosphocholine + H2O = 1-O-hexadecyl-sn-glycero-3-phosphate + choline + H(+). With respect to regulation, lysophospholipase D activity is stimulated by calcium. Loss of lysophospholipase D activity in presence of EDTA. In terms of biological role, hydrolyzes lysoglycerophospholipids to produce lysophosphatidic acid (LPA) and the corresponding amines. Shows a preference for 1-O-alkyl-sn-glycero-3-phosphocholine (lyso-PAF), lysophosphatidylcholine (lyso-PC) and N-acylethanolamine lysophospholipids. Does not display glycerophosphodiester phosphodiesterase activity, since it cannot hydrolyze either glycerophosphoinositol or glycerophosphocholine. In Homo sapiens (Human), this protein is Lysophospholipase D GDPD3.